A 647-amino-acid chain; its full sequence is Acetyl-coenzyme A synthetase (647 aa).

CoA is bound by residues 190–193 (RGGK), Thr-310, and Asn-334. ATP-binding positions include 386-388 (GEP), 410-415 (DTWWQT), Asp-499, and Arg-514. Ser-522 lines the CoA pocket. Arg-525 contacts ATP. Mg(2+)-binding residues include Val-536, His-538, and Val-541. Arg-583 provides a ligand contact to CoA. Lys-608 bears the N6-acetyllysine mark.

It belongs to the ATP-dependent AMP-binding enzyme family. Mg(2+) is required as a cofactor. In terms of processing, acetylated. Deacetylation by the SIR2-homolog deacetylase activates the enzyme.

It catalyses the reaction acetate + ATP + CoA = acetyl-CoA + AMP + diphosphate. Catalyzes the conversion of acetate into acetyl-CoA (AcCoA), an essential intermediate at the junction of anabolic and catabolic pathways. AcsA undergoes a two-step reaction. In the first half reaction, AcsA combines acetate with ATP to form acetyl-adenylate (AcAMP) intermediate. In the second half reaction, it can then transfer the acetyl group from AcAMP to the sulfhydryl group of CoA, forming the product AcCoA. This is Acetyl-coenzyme A synthetase from Xanthomonas campestris pv. campestris (strain 8004).